The chain runs to 293 residues: Pyridoxal 5'-phosphate synthase subunit PdxS (293 aa).

D23 serves as a coordination point for D-ribose 5-phosphate. Catalysis depends on K80, which acts as the Schiff-base intermediate with D-ribose 5-phosphate. G152 is a D-ribose 5-phosphate binding site. Position 164 (R164) interacts with D-glyceraldehyde 3-phosphate. D-ribose 5-phosphate-binding positions include G213 and 234–235 (GS).

This sequence belongs to the PdxS/SNZ family. In the presence of PdxT, forms a dodecamer of heterodimers.

The enzyme catalyses aldehydo-D-ribose 5-phosphate + D-glyceraldehyde 3-phosphate + L-glutamine = pyridoxal 5'-phosphate + L-glutamate + phosphate + 3 H2O + H(+). It functions in the pathway cofactor biosynthesis; pyridoxal 5'-phosphate biosynthesis. Its function is as follows. Catalyzes the formation of pyridoxal 5'-phosphate from ribose 5-phosphate (RBP), glyceraldehyde 3-phosphate (G3P) and ammonia. The ammonia is provided by the PdxT subunit. Can also use ribulose 5-phosphate and dihydroxyacetone phosphate as substrates, resulting from enzyme-catalyzed isomerization of RBP and G3P, respectively. The chain is Pyridoxal 5'-phosphate synthase subunit PdxS from Chloroflexus aurantiacus (strain ATCC 29366 / DSM 635 / J-10-fl).